A 505-amino-acid polypeptide reads, in one-letter code: Flagellin (505 aa).

This sequence belongs to the bacterial flagellin family.

The protein resides in the secreted. It is found in the bacterial flagellum. Flagellin is the subunit protein which polymerizes to form the filaments of bacterial flagella. The chain is Flagellin (fliC) from Salmonella senftenberg.